We begin with the raw amino-acid sequence, 166 residues long: Mitochondrial translation release factor in rescue (166 aa).

The N-terminal 35 residues, 1-35 (MSTVGLFHFPTPLTRICPAPWGLRLWEKLTLLSPG), are a transit peptide targeting the mitochondrion. Positions 57–121 (ENELEEQFVK…LQEKVDVFYN (65 aa)) are GGQ domain. The GGQ motif lies at 71–73 (GGQ). Q73 bears the N5-methylglutamine mark. Positions 122–148 (GENSPVHKEKREAAKKKQERKKRAKET) are disordered. The segment covering 126–137 (PVHKEKREAAKK) has biased composition (basic and acidic residues). Residues 127 to 160 (VHKEKREAAKKKQERKKRAKETLEKKKLLKELWE) adopt a coiled-coil conformation.

It belongs to the prokaryotic/mitochondrial release factor family. Interacts (via C-terminus) with MTRES1 (via S4 domain). Associates with mitoribosomal S39 large subunit, peptidyl tRNA and nascent chain. In terms of processing, methylation of glutamine in the GGQ triplet by HEMK1. Expressed in all areas of the brain tested.

Its subcellular location is the mitochondrion. Functionally, part of a mitoribosome-associated quality control pathway that prevents aberrant translation by responding to interruptions during elongation. As heterodimer with MTRES1, ejects the unfinished nascent chain and peptidyl transfer RNA (tRNA), respectively, from stalled ribosomes. Recruitment of mitoribosome biogenesis factors to these quality control intermediates suggests additional roles for MTRES1 and MTRF during mitoribosome rescue. The polypeptide is Mitochondrial translation release factor in rescue (Homo sapiens (Human)).